A 361-amino-acid chain; its full sequence is Heme A synthase (361 aa).

8 helical membrane passes run 22-42, 109-129, 139-159, 175-195, 208-228, 269-289, 303-323, and 324-344; these read LWVR…VLVG, LLAR…WVTG, LLGI…MVAS, HLTI…GLAP, FAFW…LVAG, FVHR…AIAT, VLLF…LLMV, and VPMD…GFAT. H271 contacts heme. H332 is a binding site for heme.

It belongs to the COX15/CtaA family. Type 2 subfamily. In terms of assembly, interacts with CtaB. Heme b is required as a cofactor.

It localises to the cell membrane. It carries out the reaction Fe(II)-heme o + 2 A + H2O = Fe(II)-heme a + 2 AH2. It participates in porphyrin-containing compound metabolism; heme A biosynthesis; heme A from heme O: step 1/1. Catalyzes the conversion of heme O to heme A by two successive hydroxylations of the methyl group at C8. The first hydroxylation forms heme I, the second hydroxylation results in an unstable dihydroxymethyl group, which spontaneously dehydrates, resulting in the formyl group of heme A. The chain is Heme A synthase from Chelativorans sp. (strain BNC1).